A 468-amino-acid polypeptide reads, in one-letter code: UDP-N-acetylmuramoyl-L-alanine--L-glutamate ligase (468 aa).

Residue 122–128 coordinates ATP; it reads GTKGKST.

It belongs to the MurCDEF family. MurD2 subfamily.

It localises to the cytoplasm. The catalysed reaction is UDP-N-acetyl-alpha-D-muramoyl-L-alanine + L-glutamate + ATP = UDP-N-acetyl-alpha-D-muramoyl-L-alanyl-L-glutamate + ADP + phosphate + H(+). It participates in cell wall biogenesis; peptidoglycan biosynthesis. Functionally, cell wall formation. Catalyzes the addition of L-glutamate to the nucleotide precursor UDP-N-acetylmuramoyl-L-alanine. Has weak activity with D-glutamate. This chain is UDP-N-acetylmuramoyl-L-alanine--L-glutamate ligase, found in Xanthomonas oryzae pv. oryzae (strain MAFF 311018).